We begin with the raw amino-acid sequence, 371 residues long: Peptide chain release factor 2 (371 aa).

Glutamine 253 carries the post-translational modification N5-methylglutamine.

Belongs to the prokaryotic/mitochondrial release factor family. Post-translationally, methylated by PrmC. Methylation increases the termination efficiency of RF2.

The protein localises to the cytoplasm. In terms of biological role, peptide chain release factor 2 directs the termination of translation in response to the peptide chain termination codons UGA and UAA. The polypeptide is Peptide chain release factor 2 (Mycobacterium sp. (strain JLS)).